The primary structure comprises 208 residues: MRKTLSILAISLPLLVSGYAQASESGVLKAKLAEISTLKANFTQTVTDVNKKEIQKGSGVFALAYPNQFYWHLTEPDESLIVADGRDVWIYNPFAEEVSVMDLNQAINASPIALLVHRDEETWSKYTVTNEEGCFSIAPKSVDAGVESVDVCFDGNTLTQMVLQDQQGNVSQFMLSDQTAISDDELSMFKFTVPDDVDIDDQRLNTVN.

A signal peptide spans 1-22 (MRKTLSILAISLPLLVSGYAQA).

It belongs to the LolA family. Monomer.

The protein resides in the periplasm. In terms of biological role, participates in the translocation of lipoproteins from the inner membrane to the outer membrane. Only forms a complex with a lipoprotein if the residue after the N-terminal Cys is not an aspartate (The Asp acts as a targeting signal to indicate that the lipoprotein should stay in the inner membrane). The chain is Outer-membrane lipoprotein carrier protein from Shewanella sediminis (strain HAW-EB3).